The following is a 79-amino-acid chain: Protein GOLVEN 2 (79 aa).

The first 26 residues, 1-26, serve as a signal peptide directing secretion; the sequence is MAIRVSHKSFLVALLLILFISSPTQA. A propeptide spanning residues 27-65 is cleaved from the precursor; that stretch reads RSLREVVRNRTLLVVEKSQESRKIRHEGGGSDVDGLMDM. Positions 49-79 are disordered; sequence KIRHEGGGSDVDGLMDMDYNSANKKRPIHNR. The residue at position 67 (Tyr67) is a Sulfotyrosine. Residue Pro75 is modified to Hydroxyproline.

It belongs to the RGF family. In terms of assembly, binds to LRR receptor-like serine/threonine-protein kinases to trigger their dimerization with SERK proteins and subsequent signaling. As to expression, expressed in siliques, stems, hypocotyls, shoot apex, leaves, flowers and cotyledons, and, to a lower extent, in roots.

The protein resides in the secreted. It is found in the endoplasmic reticulum. Its function is as follows. Signaling peptide (root growth factor) that regulates the pattern of root growth and lateral root development by modulating the length and the number of cortical cells in the root apical meristem (RAM), and the anticlinal asymmetric cell divisions in lateral root initiation cells. Also involved in the regulation of hypocotyl bending and root gravitropism, probably by influencing the formation of auxin gradients. Maintains the postembryonic root stem cell niche. The sequence is that of Protein GOLVEN 2 from Arabidopsis thaliana (Mouse-ear cress).